A 375-amino-acid chain; its full sequence is MGLLVFVRNLLLALCLFLVLGFLYYSAWKLHLLQWEEDSNSVVLSFDSAGQTLGSEYDRLGFLLNLDSKLPAELATKYANFSEGACKPGYASALMTAIFPRFSKPAPMFLDDSFRKWARIREFVPPFGIKGQDNLIKAILSVTKEYRLTPALDSLRCRRCIIVGNGGVLANKSLGSRIDDYDIVVRLNSAPVKGFEKDVGSKTTLRITYPEGAMQRPEQYERDSLFVLAGFKWQDFKWLKYIVYKERVSASDGFWKSVATRVPKEPPEIRILNPYFIQEAAFTLIGLPFNNGLMGRGNIPTLGSVAVTMALHGCDEVAVAGFGYDMSTPNAPLHYYETVRMAAIKESWTHNIQREKEFLRKLVKARVITDLSSGI.

At 1 to 8 (MGLLVFVR) the chain is on the cytoplasmic side. Residues 9–28 (NLLLALCLFLVLGFLYYSAW) traverse the membrane as a helical; Signal-anchor for type II membrane protein segment. Topologically, residues 29 to 375 (KLHLLQWEED…RVITDLSSGI (347 aa)) are lumenal. 2 N-linked (GlcNAc...) asparagine glycosylation sites follow: Asn80 and Asn171. A disulfide bond links Cys160 and Cys314.

Belongs to the glycosyltransferase 29 family. Post-translationally, the soluble form derives from the membrane form by proteolytic processing. In terms of tissue distribution, highly expressed in adult skeletal muscle and in all fetal tissues examined and to a much lesser extent in placenta, lung and liver.

Its subcellular location is the golgi apparatus. It is found in the golgi stack membrane. The protein resides in the secreted. It carries out the reaction a beta-D-galactosyl-(1-&gt;4)-N-acetyl-beta-D-glucosaminyl derivative + CMP-N-acetyl-beta-neuraminate = an N-acetyl-alpha-neuraminyl-(2-&gt;3)-beta-D-galactosyl-(1-&gt;4)-N-acetyl-beta-D-glucosaminyl derivative + CMP + H(+). Its pathway is protein modification; protein glycosylation. Functionally, catalyzes the formation of the NeuAc-alpha-2,3-Gal-beta-1,4-GlcNAc-, NeuAc-alpha-2,3-Gal-beta-1,3-GlcNAc- and NeuAc-alpha-2,3-Gal-beta-1,3-GalNAc- sequences found in terminal carbohydrate groups of glycoproteins and glycolipids. The highest activity is toward Gal-beta-1,3-GlcNAc and the lowest toward Gal-beta-1,3-GalNAc. This Homo sapiens (Human) protein is CMP-N-acetylneuraminate-beta-1,4-galactoside alpha-2,3-sialyltransferase (ST3GAL3).